The sequence spans 941 residues: Cell wall protein IFF9 (941 aa).

Residues methionine 1–alanine 20 form the signal peptide. A lipid anchor (GPI-anchor amidated asparagine) is attached at asparagine 917. Positions glycine 918–methionine 941 are cleaved as a propeptide — removed in mature form.

Belongs to the HYR1/IFF family. The GPI-anchor is attached to the protein in the endoplasmic reticulum and serves to target the protein to the cell surface. There, the glucosamine-inositol phospholipid moiety is cleaved off and the GPI-modified mannoprotein is covalently attached via its lipidless GPI glycan remnant to the 1,6-beta-glucan of the outer cell wall layer.

It localises to the secreted. It is found in the cell wall. The protein resides in the membrane. Functionally, GPI-anchored cell wall protein involved in cell wall organization, hyphal growth, as well as in host-fungal interaction and virulence. This Candida albicans (strain SC5314 / ATCC MYA-2876) (Yeast) protein is Cell wall protein IFF9 (IFF9).